We begin with the raw amino-acid sequence, 361 residues long: Palmitoyltransferase ZDHHC16 (361 aa).

At 1–77 (MRGQRSLLLG…VYWLVDNVIR (77 aa)) the chain is on the cytoplasmic side. Residues 78 to 98 (WFGVVFVVLVIVLTGSIVAIA) traverse the membrane as a helical segment. Over 99-116 (YLCVLPLILRTYSVPRLC) the chain is Lumenal. The chain crosses the membrane as a helical span at residues 117 to 137 (WHFFYSHWNLILIVFHYYQAI). Residues 138-198 (TTPPGYPPQG…NNCVGHYNHR (61 aa)) lie on the Cytoplasmic side of the membrane. The DHHC domain maps to 155 to 205 (SICKKCIYPKPARTHHCSICNRCVLKMDHHCPWLNNCVGHYNHRYFFSFCF). Catalysis depends on cysteine 185, which acts as the S-palmitoyl cysteine intermediate. Residues 199-219 (YFFSFCFFMTLGCVYCSYGSW) form a helical membrane-spanning segment. Topologically, residues 220–250 (DLFREAYAAIETYHQTPPPTFSFRERITHKS) are lumenal. A helical membrane pass occupies residues 251–271 (LVYLWFLCSSVALALGALTMW). The Cytoplasmic segment spans residues 272-361 (HAVLISRGET…TAHSASVMAV (90 aa)).

This sequence belongs to the DHHC palmitoyltransferase family. In terms of assembly, interacts with ABL1. Interacts with COPS5. In terms of tissue distribution, ubiquitously expressed.

The protein resides in the endoplasmic reticulum membrane. The enzyme catalyses L-cysteinyl-[protein] + hexadecanoyl-CoA = S-hexadecanoyl-L-cysteinyl-[protein] + CoA. Palmitoyl acyltransferase that mediates palmitoylation of proteins such as PLN and ZDHHC6. Required during embryonic heart development and cardiac function, possibly by mediating palmitoylation of PLN, thereby affecting PLN phosphorylation and homooligomerization. Also required for eye development. Palmitoylates ZDHHC6, affecting the quaternary assembly of ZDHHC6, its localization, stability and function. May play a role in DNA damage response. May be involved in apoptosis regulation. Involved in the proliferation of neural stem cells by regulating the FGF/ERK pathway. This chain is Palmitoyltransferase ZDHHC16, found in Mus musculus (Mouse).